Here is a 322-residue protein sequence, read N- to C-terminus: Ubiquinone biosynthesis O-methyltransferase, mitochondrial (322 aa).

The N-terminal 37 residues, 1-37 (MLASVRVNQLQRLLLSARRLSSSPIIPPSRLLHQRLF), are a transit peptide targeting the mitochondrion. Residues 46-75 (AASFSSSHPKIQTLEGKASNKSRSTSSTTS) form a disordered region. S-adenosyl-L-methionine contacts are provided by Arg-108, Gly-139, Asp-160, and Leu-205. Mg(2+) contacts are provided by Glu-206, Glu-209, and His-210.

It belongs to the class I-like SAM-binding methyltransferase superfamily. UbiG/COQ3 family. Component of a multi-subunit COQ enzyme complex. Requires Mg(2+) as cofactor.

The protein localises to the mitochondrion inner membrane. It carries out the reaction a 3,4-dihydroxy-5-(all-trans-polyprenyl)benzoate + S-adenosyl-L-methionine = a 4-hydroxy-3-methoxy-5-(all-trans-polyprenyl)benzoate + S-adenosyl-L-homocysteine + H(+). The catalysed reaction is a 3-demethylubiquinone + S-adenosyl-L-methionine = a ubiquinone + S-adenosyl-L-homocysteine. It catalyses the reaction a 3-demethylubiquinol + S-adenosyl-L-methionine = a ubiquinol + S-adenosyl-L-homocysteine + H(+). It functions in the pathway cofactor biosynthesis; ubiquinone biosynthesis. O-methyltransferase required for two non-consecutive steps during ubiquinone biosynthesis. Catalyzes the 2 O-methylation of 3,4-dihydroxy-5-(all-trans-polyprenyl)benzoic acid into 4-hydroxy-3-methoxy-5-(all-trans-polyprenyl)benzoic acid. Also catalyzes the last step of ubiquinone biosynthesis by mediating methylation of 3-demethylubiquinone into ubiquinone. Also able to mediate the methylation of 3-demethylubiquinol into ubiquinol. This is Ubiquinone biosynthesis O-methyltransferase, mitochondrial from Arabidopsis thaliana (Mouse-ear cress).